The chain runs to 162 residues: uncharacterized protein (162 aa).

It belongs to the M.jannaschii MJ0150/MJ0739/MJ0745/MJ1460/MJ1642 family.

This is an uncharacterized protein from Methanocaldococcus jannaschii (strain ATCC 43067 / DSM 2661 / JAL-1 / JCM 10045 / NBRC 100440) (Methanococcus jannaschii).